Consider the following 124-residue polypeptide: Immunoglobulin lambda variable 5-52 (124 aa).

The N-terminal stretch at 1 to 19 (MAWTLLLLVLLSHCTGSLS) is a signal peptide. Residues 20–44 (QPVLTQPSSHSASSGASVRLTCMLS) are framework-1. Residues 21–124 (PVLTQPSSHS…CGTWHSNSKT (104 aa)) enclose the Ig-like domain. Cys41 and Cys115 are joined by a disulfide. Positions 45 to 53 (SGFSVGDFW) are complementarity-determining-1. Positions 54–70 (IRWYQQKPGNPPRYLLY) are framework-2. Positions 71 to 77 (YHSDSNK) are complementarity-determining-2. The segment at 78–115 (GQGSGVPSRFSGSNDASANAGILRISGLQPEDEADYYC) is framework-3. The complementarity-determining-3 stretch occupies residues 116–124 (GTWHSNSKT).

As to quaternary structure, immunoglobulins are composed of two identical heavy chains and two identical light chains; disulfide-linked.

The protein localises to the secreted. It localises to the cell membrane. In terms of biological role, v region of the variable domain of immunoglobulin light chains that participates in the antigen recognition. Immunoglobulins, also known as antibodies, are membrane-bound or secreted glycoproteins produced by B lymphocytes. In the recognition phase of humoral immunity, the membrane-bound immunoglobulins serve as receptors which, upon binding of a specific antigen, trigger the clonal expansion and differentiation of B lymphocytes into immunoglobulins-secreting plasma cells. Secreted immunoglobulins mediate the effector phase of humoral immunity, which results in the elimination of bound antigens. The antigen binding site is formed by the variable domain of one heavy chain, together with that of its associated light chain. Thus, each immunoglobulin has two antigen binding sites with remarkable affinity for a particular antigen. The variable domains are assembled by a process called V-(D)-J rearrangement and can then be subjected to somatic hypermutations which, after exposure to antigen and selection, allow affinity maturation for a particular antigen. This is Immunoglobulin lambda variable 5-52 from Homo sapiens (Human).